The primary structure comprises 421 residues: Threonine--tRNA ligase editing subunit (421 aa).

It belongs to the class-II aminoacyl-tRNA synthetase family. Archaea-specific ThrRS editing domain subfamily. Probably interacts with its catalytic subunit.

It is found in the cytoplasm. In terms of biological role, freestanding tRNA editing subunit of threonine--tRNA ligase, the catalytic subunit is probably AC Q9YDW0. Deacylates (edits) mischarged L-seryl-tRNA(Thr) in trans; has no activity on correctly charged L-threonyl-tRNA(Thr). Probably does not aminoacylate tRNA(Thr). Deacylates correctly charged glycyl-tRNA(Gly), but not glycyl-tRNA(Gly)(2'-dA76) (the terminal 2'-OH of tRNA adenine 76 has been dehydroxylated) nor the 2'-fluoro tRNA derivative, strongly suggesting the editing function is catalyzed by the 2'-OH of A76 of tRNA(Thr). This is Threonine--tRNA ligase editing subunit (thrS2) from Aeropyrum pernix (strain ATCC 700893 / DSM 11879 / JCM 9820 / NBRC 100138 / K1).